A 287-amino-acid chain; its full sequence is MAASLWMGDLEPYMDENFISRAFATMGETVMSVKIIRNRLTGIPAGYCFVEFADLATAEKCLHKINGKPLPGATPAKRFKLNYVTYGKQPDNSPEYSLFVGDLTPDVDDGMLYEFFVKVYPSCRGGKVVLDQTGVSKGYGFVKFTDELEQKRALTECQGAVGLGSKPVRLSVAIPKASRVKPVEYSQMYSYSYNQYYQQYQNYYAQWGYDQNTGSYSYSYPQYGYTQSTMQTYEEVGDDALEDPMPQLDVTEANKEFMEQSEELYDALMDCHWQPLDTVSSEIPAMM.

2 RRM domains span residues 3–86 and 96–175; these read ASLW…YVTY and YSLF…VAIP.

The protein belongs to the RRM TRSPAP family. In terms of assembly, component of the tRNA(Sec) complex composed at least of EEFSEC, SECISBP2, SEPHS1, SEPSECS, TRNAU1AP and tRNA(Sec). Found in a complex with tRNA(Sec). Interacts with SEPSECS. Associates with mRNP and/or polysomes. Found in a complex with EEFSEC, SECISBP2, TRNAU1AP and tRNA(Sec).

The protein localises to the nucleus. It localises to the cytoplasm. In terms of biological role, involved in the early steps of selenocysteine biosynthesis and tRNA(Sec) charging to the later steps resulting in the cotranslational incorporation of selenocysteine into selenoproteins. Stabilizes the SECISBP2, EEFSEC and tRNA(Sec) complex. May be involved in the methylation of tRNA(Sec). Enhances efficiency of selenoproteins synthesis. This Pongo abelii (Sumatran orangutan) protein is tRNA selenocysteine 1-associated protein 1 (TRNAU1AP).